The primary structure comprises 430 residues: UDP-N-acetylmuramoylalanine--D-glutamate ligase (430 aa).

Residue 109 to 115 (GTDGKST) coordinates ATP.

Belongs to the MurCDEF family.

It localises to the cytoplasm. The enzyme catalyses UDP-N-acetyl-alpha-D-muramoyl-L-alanine + D-glutamate + ATP = UDP-N-acetyl-alpha-D-muramoyl-L-alanyl-D-glutamate + ADP + phosphate + H(+). It functions in the pathway cell wall biogenesis; peptidoglycan biosynthesis. Its function is as follows. Cell wall formation. Catalyzes the addition of glutamate to the nucleotide precursor UDP-N-acetylmuramoyl-L-alanine (UMA). This chain is UDP-N-acetylmuramoylalanine--D-glutamate ligase, found in Thermotoga sp. (strain RQ2).